A 764-amino-acid chain; its full sequence is Palmitoyltransferase AKR1 (764 aa).

2 disordered regions span residues 1–38 (MVNELENVPRASTLTNEEQTVDPSNNDSQEDISLGDSN) and 51–71 (SGNEEESGNEQVNHNDEAEED). Residues 1–321 (MVNELENVPR…IKKWFKKSQH (321 aa)) are Cytoplasmic-facing. Positions 10–27 (RASTLTNEEQTVDPSNND) are enriched in polar residues. 2 positions are modified to phosphoserine: Ser-51 and Ser-57. ANK repeat units lie at residues 72–102 (PLLTRYHTACQRGDLATVKEMIHGKLLEVNN), 108–137 (EHITGLHWASINNRLSVVDFLVSQGADVNA), 142–171 (LHATPLHWAARYGYVYIVDFLLKHGADPTM), 175–204 (QGFNLLHLSVNSSNIMLVLYVLFNVVSKGL), 213–242 (KGRTSLLWAAYQGDSLTVAELLKFGASIKI), and 246–275 (EGFTPLHWGTVKGQPHVLKYLIQDGADFFQ). The helical transmembrane segment at 322 to 341 (AKLVTFITPFLFLGIAFALF) threads the bilayer. Residues 342 to 346 (SHINP) lie on the Lumenal side of the membrane. Residues 347–364 (LFVIIVLFLLAIATNKGL) form a helical membrane-spanning segment. Topologically, residues 365–384 (NKFVLPSYGRMGVHNVTLLR) are cytoplasmic. The chain crosses the membrane as a helical span at residues 385–405 (SPLLSGVFFGTLLWVTIVWFF). Topologically, residues 406-418 (KVMPRTFSDEQYT) are lumenal. Residues 419-439 (NILMLVILVSVFYLFGQLVIM) traverse the membrane as a helical segment. Topologically, residues 440–513 (DPGCLPEETD…FNDVGLKNHK (74 aa)) are cytoplasmic. A DHHC domain is found at 470-520 (NFCIETWIRKPLRSKFSPLNNAVVARFDHYCPWIFNDVGLKNHKAFIFFIT). The active-site S-palmitoyl cysteine intermediate is Cys-500. A helical membrane pass occupies residues 514–534 (AFIFFITLMESGIFTFLALCL). The Lumenal segment spans residues 535–570 (EYFDELEDAHEDTSQKNGKCFILGASDLCSGLIYDR). The helical transmembrane segment at 571–591 (FVFLILLWALLQSIWVASLIF) threads the bilayer. Topologically, residues 592-764 (VQAFQICKGM…KDVEQGNDMV (173 aa)) are cytoplasmic.

It belongs to the DHHC palmitoyltransferase family. AKR/ZDHHC17 subfamily.

The protein resides in the early endosome membrane. Its subcellular location is the golgi apparatus membrane. The enzyme catalyses L-cysteinyl-[protein] + hexadecanoyl-CoA = S-hexadecanoyl-L-cysteinyl-[protein] + CoA. Palmitoyltransferase specific for casein kinase 1. Palmitoylates isoforms YCK1 and YCK2 at both C-terminal cysteine residues, which is required for their proper plasma membrane localization. Required for constitutive endocytosis of a-factor receptor STE3 and both constitutive and pheromone-induced endocytosis of alpha-factor receptor STE2. The protein is Palmitoyltransferase AKR1 (AKR1) of Saccharomyces cerevisiae (strain ATCC 204508 / S288c) (Baker's yeast).